Consider the following 115-residue polypeptide: Large ribosomal subunit protein bL19 (115 aa).

The protein belongs to the bacterial ribosomal protein bL19 family.

In terms of biological role, this protein is located at the 30S-50S ribosomal subunit interface and may play a role in the structure and function of the aminoacyl-tRNA binding site. The polypeptide is Large ribosomal subunit protein bL19 (Alkaliphilus oremlandii (strain OhILAs) (Clostridium oremlandii (strain OhILAs))).